The chain runs to 335 residues: Aliphatic sulfonates import ATP-binding protein SsuB (335 aa).

The interval 29–61 is disordered; the sequence is DGDAQDAAVYERDGGAHAPPFASGGAPPDGDRA. The ABC transporter domain maps to 74–293; sequence VRLTRVSKRY…ARASAAFAAL (220 aa). ATP is bound at residue 106–113; sequence GRSGCGKS. Positions 308–335 are disordered; the sequence is APAAPNAAGPEGASRGRAAPASGLRWAV.

The protein belongs to the ABC transporter superfamily. Aliphatic sulfonates importer (TC 3.A.1.17.2) family. In terms of assembly, the complex is composed of two ATP-binding proteins (SsuB), two transmembrane proteins (SsuC) and a solute-binding protein (SsuA).

The protein localises to the cell inner membrane. It carries out the reaction ATP + H2O + aliphatic sulfonate-[sulfonate-binding protein]Side 1 = ADP + phosphate + aliphatic sulfonateSide 2 + [sulfonate-binding protein]Side 1.. Its function is as follows. Part of the ABC transporter complex SsuABC involved in aliphatic sulfonates import. Responsible for energy coupling to the transport system. This chain is Aliphatic sulfonates import ATP-binding protein SsuB, found in Burkholderia pseudomallei (strain 1710b).